The sequence spans 64 residues: Putative antitoxin MJ0975 (64 aa).

It belongs to the UPF0165 family.

Its function is as follows. Possibly the antitoxin component of a type II toxin-antitoxin (TA) system. Its cognate toxin is VapC2 (Potential). The sequence is that of Putative antitoxin MJ0975 (vapB2) from Methanocaldococcus jannaschii (strain ATCC 43067 / DSM 2661 / JAL-1 / JCM 10045 / NBRC 100440) (Methanococcus jannaschii).